Consider the following 77-residue polypeptide: Acyl carrier protein (77 aa).

Positions 2–77 (ASIEKRIKEI…DAIDYITDHT (76 aa)) constitute a Carrier domain. O-(pantetheine 4'-phosphoryl)serine is present on Ser37.

It belongs to the acyl carrier protein (ACP) family. Post-translationally, 4'-phosphopantetheine is transferred from CoA to a specific serine of apo-ACP by AcpS. This modification is essential for activity because fatty acids are bound in thioester linkage to the sulfhydryl of the prosthetic group.

The protein resides in the cytoplasm. It functions in the pathway lipid metabolism; fatty acid biosynthesis. Carrier of the growing fatty acid chain in fatty acid biosynthesis. The protein is Acyl carrier protein of Geobacter sp. (strain M21).